A 458-amino-acid polypeptide reads, in one-letter code: tRNA-2-methylthio-N(6)-dimethylallyladenosine synthase (458 aa).

One can recognise an MTTase N-terminal domain in the interval 3–120; sequence QKLYIETFGC…LPSMLEQVRC (118 aa). Cysteine 12, cysteine 49, cysteine 83, cysteine 157, cysteine 161, and cysteine 164 together coordinate [4Fe-4S] cluster. The Radical SAM core domain occupies 143–375; that stretch reads RADGPKAFVS…QAKIADNAAK (233 aa). In terms of domain architecture, TRAM spans 378-441; it reads ASMVGSIQSV…PNSLRGRLIG (64 aa).

The protein belongs to the methylthiotransferase family. MiaB subfamily. As to quaternary structure, monomer. It depends on [4Fe-4S] cluster as a cofactor.

The protein localises to the cytoplasm. It catalyses the reaction N(6)-dimethylallyladenosine(37) in tRNA + (sulfur carrier)-SH + AH2 + 2 S-adenosyl-L-methionine = 2-methylsulfanyl-N(6)-dimethylallyladenosine(37) in tRNA + (sulfur carrier)-H + 5'-deoxyadenosine + L-methionine + A + S-adenosyl-L-homocysteine + 2 H(+). Catalyzes the methylthiolation of N6-(dimethylallyl)adenosine (i(6)A), leading to the formation of 2-methylthio-N6-(dimethylallyl)adenosine (ms(2)i(6)A) at position 37 in tRNAs that read codons beginning with uridine. This is tRNA-2-methylthio-N(6)-dimethylallyladenosine synthase from Methylococcus capsulatus (strain ATCC 33009 / NCIMB 11132 / Bath).